Reading from the N-terminus, the 319-residue chain is ATP-dependent 6-phosphofructokinase (319 aa).

Gly-11 provides a ligand contact to ATP. Residue 21 to 25 (RAVVR) participates in ADP binding. Residues 72–73 (RC) and 102–105 (GDGS) each bind ATP. Asp-103 contributes to the Mg(2+) binding site. Position 125 to 127 (125 to 127 (TID)) interacts with substrate. Asp-127 serves as the catalytic Proton acceptor. Arg-154 is a binding site for ADP. Residues Arg-162 and 169–171 (MGR) each bind substrate. ADP-binding positions include 185-187 (GAE), Arg-211, and 213-215 (KKH). Substrate-binding positions include Glu-222, Arg-243, and 249-252 (HVQR).

Belongs to the phosphofructokinase type A (PFKA) family. ATP-dependent PFK group I subfamily. Prokaryotic clade 'B1' sub-subfamily. In terms of assembly, homotetramer. It depends on Mg(2+) as a cofactor.

It localises to the cytoplasm. It catalyses the reaction beta-D-fructose 6-phosphate + ATP = beta-D-fructose 1,6-bisphosphate + ADP + H(+). Its pathway is carbohydrate degradation; glycolysis; D-glyceraldehyde 3-phosphate and glycerone phosphate from D-glucose: step 3/4. Allosterically activated by ADP and other diphosphonucleosides, and allosterically inhibited by phosphoenolpyruvate. Functionally, catalyzes the phosphorylation of D-fructose 6-phosphate to fructose 1,6-bisphosphate by ATP, the first committing step of glycolysis. In Geobacillus sp. (strain WCH70), this protein is ATP-dependent 6-phosphofructokinase.